The chain runs to 677 residues: Serine/threonine-protein kinase YPK2/YKR2 (677 aa).

Basic residues predominate over residues 1-12 (MHSWRISKFKLG). Residues 1–115 (MHSWRISKFK…ETQGPSSESG (115 aa)) form a disordered region. The span at 41-56 (KHHDGSPKNHNHEHEH) shows a compositional bias: basic and acidic residues. Polar residues-rich tracts occupy residues 61-93 (INTN…NDNS) and 101-115 (SQSS…SESG). Phosphothreonine occurs at positions 63 and 66. Residue S72 is modified to Phosphoserine. The Protein kinase domain occupies 344-599 (FDLLKVIGKG…TDEIRNHPFF (256 aa)). Residues 350–358 (IGKGSFGKV) and K373 contribute to the ATP site. The active-site Proton acceptor is the D467. T499 is modified (phosphothreonine). T501 bears the Phosphothreonine; by PKH2 mark. Positions 600 to 670 (KDISWKKLLL…IGDEQLGDSP (71 aa)) constitute an AGC-kinase C-terminal domain. S641 is subject to Phosphoserine; by TOR2. Position 650 is a phosphoserine (S650). T659 is subject to Phosphothreonine; by TOR2. S669 is subject to Phosphoserine.

This sequence belongs to the protein kinase superfamily. AGC Ser/Thr protein kinase family. RAC subfamily. In terms of processing, autophosphorylated. Phosphorylated by PKH2 and TOR2.

The protein localises to the cytoplasm. It carries out the reaction L-seryl-[protein] + ATP = O-phospho-L-seryl-[protein] + ADP + H(+). It catalyses the reaction L-threonyl-[protein] + ATP = O-phospho-L-threonyl-[protein] + ADP + H(+). With respect to regulation, activated by phytosphingosine (PHS), a sphingoid long chain base. Activated by PKH2 phosphorylation. Kinase activity is regulated by TOR2 via direct phosphorylation of Ser-641 and Thr-659. Functionally, plays an essential role in the proliferation of yeast cells. Involved in a signaling pathway, required for optimal cell wall integrity, that acts in parallel with the PKC1-SLT2-dependent pathway. A substrate of TOR complex 2 (TORC2) and required for TORC2 to regulate spatial aspects of cell growth. Phosphorylation of residue Thr-501 is indispensable for function. May act as a downstream kinase in the sphingolipid-mediated signaling pathway. This is Serine/threonine-protein kinase YPK2/YKR2 (YPK2) from Saccharomyces cerevisiae (strain ATCC 204508 / S288c) (Baker's yeast).